A 554-amino-acid chain; its full sequence is CTP synthase (554 aa).

The interval 1-265 is amidoligase domain; sequence MTPLIFVTGG…DEIVIDQFKL (265 aa). A CTP-binding site is contributed by S13. Residue S13 participates in UTP binding. Residues 14-19 and D71 each bind ATP; that span reads SLGKGI. 2 residues coordinate Mg(2+): D71 and E139. Residues 146-148, 186-191, and K222 each bind CTP; these read DIE and KTKPTQ. Residues 186–191 and K222 contribute to the UTP site; that span reads KTKPTQ. The Glutamine amidotransferase type-1 domain occupies 292-545; the sequence is TIAVVGKYVD…VKASRARKAG (254 aa). G353 serves as a coordination point for L-glutamine. C380 acts as the Nucleophile; for glutamine hydrolysis in catalysis. L-glutamine contacts are provided by residues 381–384, E404, and R471; that span reads YGMQ. Active-site residues include H518 and E520.

It belongs to the CTP synthase family. In terms of assembly, homotetramer.

The enzyme catalyses UTP + L-glutamine + ATP + H2O = CTP + L-glutamate + ADP + phosphate + 2 H(+). The catalysed reaction is L-glutamine + H2O = L-glutamate + NH4(+). It carries out the reaction UTP + NH4(+) + ATP = CTP + ADP + phosphate + 2 H(+). Its pathway is pyrimidine metabolism; CTP biosynthesis via de novo pathway; CTP from UDP: step 2/2. With respect to regulation, allosterically activated by GTP, when glutamine is the substrate; GTP has no effect on the reaction when ammonia is the substrate. The allosteric effector GTP functions by stabilizing the protein conformation that binds the tetrahedral intermediate(s) formed during glutamine hydrolysis. Inhibited by the product CTP, via allosteric rather than competitive inhibition. Its function is as follows. Catalyzes the ATP-dependent amination of UTP to CTP with either L-glutamine or ammonia as the source of nitrogen. Regulates intracellular CTP levels through interactions with the four ribonucleotide triphosphates. The protein is CTP synthase of Xylella fastidiosa (strain M12).